The following is a 263-amino-acid chain: Proteasome subunit alpha type-1 (263 aa).

N-acetylmethionine is present on Met1. Ser110 is subject to Phosphoserine; alternate. A glycan (O-linked (GlcNAc) serine; alternate) is linked at Ser110. Lys115 is covalently cross-linked (Glycyl lysine isopeptide (Lys-Gly) (interchain with G-Cter in ubiquitin)). Phosphoserine is present on Ser177. Lys208 participates in a covalent cross-link: Glycyl lysine isopeptide (Lys-Gly) (interchain with G-Cter in ubiquitin). The tract at residues 232–263 is disordered; that stretch reads FLEGLEERPQRKAQPAQPADEPAEKADEPMEH. Residues 253-263 show a composition bias toward basic and acidic residues; that stretch reads PAEKADEPMEH.

Belongs to the peptidase T1A family. In terms of assembly, the 26S proteasome consists of a 20S proteasome core and two 19S regulatory subunits. The 20S proteasome core is a barrel-shaped complex made of 28 subunits that are arranged in four stacked rings. The two outer rings are each formed by seven alpha subunits, and the two inner rings are formed by seven beta subunits. The proteolytic activity is exerted by three beta-subunits PSMB5, PSMB6 and PSMB7. Interacts with NOTCH3. Interacts with ZFAND1.

The protein localises to the cytoplasm. Its subcellular location is the nucleus. In terms of biological role, component of the 20S core proteasome complex involved in the proteolytic degradation of most intracellular proteins. This complex plays numerous essential roles within the cell by associating with different regulatory particles. Associated with two 19S regulatory particles, forms the 26S proteasome and thus participates in the ATP-dependent degradation of ubiquitinated proteins. The 26S proteasome plays a key role in the maintenance of protein homeostasis by removing misfolded or damaged proteins that could impair cellular functions, and by removing proteins whose functions are no longer required. Associated with the PA200 or PA28, the 20S proteasome mediates ubiquitin-independent protein degradation. This type of proteolysis is required in several pathways including spermatogenesis (20S-PA200 complex) or generation of a subset of MHC class I-presented antigenic peptides (20S-PA28 complex). The protein is Proteasome subunit alpha type-1 (PSMA1) of Macaca fascicularis (Crab-eating macaque).